The following is a 34-amino-acid chain: Corticostatin-2 (34 aa).

Intrachain disulfides connect Cys-3/Cys-32, Cys-5/Cys-21, and Cys-11/Cys-31.

Belongs to the alpha-defensin family.

The protein localises to the secreted. Microbicidal activity and inhibits corticotropin (ACTH) stimulated corticosterone production. The protein is Corticostatin-2 of Oryctolagus cuniculus (Rabbit).